The sequence spans 357 residues: MIVRKSMGRVKSLLMLLMVLGFSFATYNLVFMMMEHKAGNDLGSFDGKAMEIRNTNSKYHVAVTATDAAYSQWQCRIMYYWYKKTKDMPGSAMGKFTRILHSGRGDQLMNEIPTFVVDPLPEGLDRGYIVLNRPWAFVQWLEKAVIDEEYILMAEPDHIFVNPLPNLATENEPAGYPFFYIKPAENEKIMRKFYPKENGPVTDVDPIGNSPVIIHKYMLEEIAPTWVNISLRMKDDPETDKAFGWVLEMYAYAVASALHGIKHILRKDFMLQPPWDLDVGKKFIIHFTYGCDYNLKGKLTYGKIGEWRFDKRSYLMGPPPKNLSLPPPGVPESVVRLVKMVNEATANIPNWDSLNRS.

Residues 13–33 form a helical; Signal-anchor membrane-spanning segment; the sequence is LLMLLMVLGFSFATYNLVFMM.

Expressed in the vasculature of leaves, petioles, stems and roots. Expressed in the vascular cylinder throughout the root, and nodule vasculature.

It is found in the golgi apparatus membrane. The enzyme catalyses trans-4-hydroxy-L-prolyl-[protein] + UDP-beta-L-arabinofuranose = O-(beta-L-arabinofuranosyl)-trans-4-hydroxy-L-prolyl-[protein] + UDP + H(+). In terms of biological role, probable glycosyltransferase involved in the O-arabinosylation of several proteins including extensins and small signaling peptides. Catalyzes the transfer of the initial L-arabinose to the hydroxyl group of Hyp residues. Probably involved in the arabinosylation of CLE12, a signaling peptide that moves from root to shoot, to interact with SUNN receptor kinase signaling that regulates nodulation. Involved in long distance nodulation signaling events. Involved in the autoregulation of nodulation (AON), a long distance systemic signaling from root to shoot and back again, which allows legumes to limit the number of root nodules formed based on available nitrogen and previous rhizobial colonization. Functions in the root, upstream of the shoot receptor kinase SUNN and via CLE peptide, to control AON. This chain is Hydroxyproline O-arabinosyltransferase RDN1, found in Medicago truncatula (Barrel medic).